A 586-amino-acid chain; its full sequence is Dual specificity tyrosine-phosphorylation-regulated kinase 3 (586 aa).

Positions 1-13 (MGGAARERGRKDA) are enriched in basic and acidic residues. A disordered region spans residues 1-187 (MGGAARERGR…QGVIGGPNNG (187 aa)). In terms of domain architecture, Protein kinase spans 208–521 (YEVLKIIGKG…PAQALRHPWI (314 aa)). Residues 214 to 222 (IGKGSFGQV), K237, and 287 to 290 (FELL) contribute to the ATP site. D334 (proton acceptor) is an active-site residue. Y368 is modified (phosphotyrosine). Residues 467–480 (RSRRGKKRGPPGSK) carry the Nuclear localization signal motif.

It belongs to the protein kinase superfamily. CMGC Ser/Thr protein kinase family. MNB/DYRK subfamily. As to quaternary structure, interacts with SIRT1. Mg(2+) is required as a cofactor. Post-translationally, protein kinase activity is activated following autophosphorylation at Tyr-368. In terms of processing, ubiquitinated at anaphase by the anaphase-promoting complex (APC/C), leading to its degradation by the proteasome. Expressed predominantly in testis. Expressed in late pachytene spermatocytes.

Its subcellular location is the nucleus. It is found in the cytoplasm. The protein resides in the nucleus speckle. The protein localises to the cytoplasmic granule. It localises to the cytoskeleton. Its subcellular location is the microtubule organizing center. It is found in the centrosome. It catalyses the reaction L-seryl-[protein] + ATP = O-phospho-L-seryl-[protein] + ADP + H(+). The catalysed reaction is L-threonyl-[protein] + ATP = O-phospho-L-threonyl-[protein] + ADP + H(+). It carries out the reaction L-tyrosyl-[protein] + ATP = O-phospho-L-tyrosyl-[protein] + ADP + H(+). Protein kinase activity is activated following autophosphorylation at Tyr-368. In terms of biological role, dual-specificity protein kinase that promotes disassembly of several types of membraneless organelles during mitosis, such as stress granules, nuclear speckles and pericentriolar material. Dual-specificity tyrosine-regulated kinases (DYRKs) autophosphorylate a critical tyrosine residue in their activation loop and phosphorylate their substrate on serine and threonine residues. Acts as a central dissolvase of membraneless organelles during the G2-to-M transition, after the nuclear-envelope breakdown: acts by mediating phosphorylation of multiple serine and threonine residues in unstructured domains of proteins, such as SRRM1 and PCM1. Does not mediate disassembly of all membraneless organelles: disassembly of P-body and nucleolus is not regulated by DYRK3. Dissolution of membraneless organelles at the onset of mitosis is also required to release mitotic regulators, such as ZNF207, from liquid-unmixed organelles where they are sequestered and keep them dissolved during mitosis. Regulates mTORC1 by mediating the dissolution of stress granules: during stressful conditions, DYRK3 partitions from the cytosol to the stress granule, together with mTORC1 components, which prevents mTORC1 signaling. When stress signals are gone, the kinase activity of DYRK3 is required for the dissolution of stress granule and mTORC1 relocation to the cytosol: acts by mediating the phosphorylation of the mTORC1 inhibitor AKT1S1, allowing full reactivation of mTORC1 signaling. Also acts as a negative regulator of EPO-dependent erythropoiesis: may place an upper limit on red cell production during stress erythropoiesis. Inhibits cell death due to cytokine withdrawal in hematopoietic progenitor cells. Promotes cell survival upon genotoxic stress through phosphorylation of SIRT1: this in turn inhibits p53/TP53 activity and apoptosis. This is Dual specificity tyrosine-phosphorylation-regulated kinase 3 from Rattus norvegicus (Rat).